Reading from the N-terminus, the 1229-residue chain is MKSFGSVRSIFMHANSVDLVLMGLGLIGAVGDGFITPIIFFITGLLLNDIGDSSFGDKTFMHAIMKNAVALLYVAGASLVICFVEGYCWTRTGERQASRMREKYLRAVLRQDVGYFDLHVTSTSDVITSVSSDTLVIQDVLSEKLPNFLMSASAFVASYIVGFIMLWRLTIVGFPFFILLLIPGLMCGRALINISRKIREEYNEAGSIAEQAISLVRTVYAFGSERKMISKFSAALEGSVKLGLRQGIAKGIAIGSNGVTYAIWGFMTWYGSRMVMYHGAKGGTIFAVIICITYGGTSLGRGLSNLKYFSEAVVAGERIIEVIKRVPDIDSDNPRGQVLENIKGEVQFKHVKFMYSSRPETPIFDDLCLRIPSGKSVALVGGSGSGKSTVISLLQRFYDPIVGEILIDGVSIKKLQVKWLRSQMGLVSQEPALFATSIEENILFGKEDASFDEVVEAAKSSNAHDFISQFPLGYKTQVGERGVQMSGGQKQRISIARAIIKSPTLLLLDEATSALDSESERVVQEALDNATIGRTTIVIAHRLSTIRNVDVICVFKNGQIVETGSHEELMENVDGQYTSLVRLQIMENEESNDNVSVSMREGQFSNFNKDVKYSSRLSIQSRSSLFATSSIDTNLAGSIPKDKKPSFKRLMAMNKPEWKHALYGCLSAVLYGALHPIYAYASGSMVSVYFLTSHDEMKEKTRIYVLLFVGLAVLCFLISIIQQYSFAYMGEYLTKRIRENILSKLLTFEVSWFDEDENSSGSICSRLAKDANVVRSLVGERVSLLVQTISAVSVACTLGLAISWKLSIVMIAIQPVVVGCFYTQRIVLKSISKKAIKAQDESSKLAAEAVSNIRTITAFSSQERILKLLKMVQEGPQRENIRQSWLAGIVLATSRSLMTCTSALNYWYGARLIIDGKITSKAFFELFILFVSTGRVIADAGAMTMDLAKGSDAVGSVFAVLDRYTNIEPEKPDGFVPQNIKGQIKFVNVDFAYPTRPDVIIFKNFSIDIDEGKSTAIVGPSGSGKSTIIGLIERFYDPLKGIVKIDGRDIRSYHLRSLRQHIGLVSQEPILFAGTIRENIMYGGASDKIDESEIIEAAKAANAHDFIVTLSDGYDTYCGDRGVQLSGGQKQRIAIARAVLKNPSVLLLDEATSALDNQSERMVQDALGRLMVGRTSVVIAHRLSTIQNCDTITVLDKGKVVECGTHSSLLAKGPTGVYFSLVSLQRTRY.

A run of 6 helical transmembrane segments spans residues 22–42, 69–89, 145–167, 171–193, 251–271, and 274–294; these read MGLGLIGAVGDGFITPIIFFI, VALLYVAGASLVICFVEGYCW, LPNFLMSASAFVASYIVGFIMLW, IVGFPFFILLLIPGLMCGRALIN, GIAIGSNGVTYAIWGFMTWYG, and MVMYHGAKGGTIFAVIICITY. Residues 22-311 form the ABC transmembrane type-1 1 domain; the sequence is MGLGLIGAVG…GLSNLKYFSE (290 aa). Residues 346–582 form the ABC transporter 1 domain; sequence VQFKHVKFMY…VDGQYTSLVR (237 aa). An ATP-binding site is contributed by 381–388; the sequence is GGSGSGKS. N-linked (GlcNAc...) asparagine glycans are attached at residues asparagine 529 and asparagine 594. The next 2 helical transmembrane spans lie at 661-681 and 703-723; these read ALYGCLSAVLYGALHPIYAYA and IYVLLFVGLAVLCFLISIIQQ. An ABC transmembrane type-1 2 domain is found at 661-949; that stretch reads ALYGCLSAVL…AGAMTMDLAK (289 aa). N-linked (GlcNAc...) asparagine glycosylation occurs at asparagine 758. Helical transmembrane passes span 782–800, 807–823, 885–908, and 923–943; these read VSLLVQTISAVSVACTLGL, SIVMIAIQPVVVGCFYT, WLAGIVLATSRSLMTCTSALNYWY, and FFELFILFVSTGRVIADAGAM. Positions 984 to 1222 constitute an ABC transporter 2 domain; it reads IKFVNVDFAY…GPTGVYFSLV (239 aa). Asparagine 1004 is a glycosylation site (N-linked (GlcNAc...) asparagine). 1019 to 1026 is an ATP binding site; it reads GPSGSGKS. Asparagine 1157 is a glycosylation site (N-linked (GlcNAc...) asparagine).

It belongs to the ABC transporter superfamily. ABCB family. Multidrug resistance exporter (TC 3.A.1.201) subfamily.

The protein localises to the membrane. The sequence is that of ABC transporter B family member 22 (ABCB22) from Arabidopsis thaliana (Mouse-ear cress).